The following is a 186-amino-acid chain: Probable GPI-anchored cupredoxin ARB_05732-1 (186 aa).

A signal peptide spans 1 to 18 (MVNMNILTTVALAGLAAA). His-55 contributes to the Cu cation binding site. Cys-66 and Cys-104 are joined by a disulfide. Asn-87 is a glycosylation site (N-linked (GlcNAc...) asparagine). Positions 98 and 103 each coordinate Cu cation. The interval 130–160 (GAGNGQAPSRVNNGSSGSGTPTSGGAPAATS) is disordered. A glycan (N-linked (GlcNAc...) asparagine) is linked at Asn-142. The span at 143-160 (GSSGSGTPTSGGAPAATS) shows a compositional bias: low complexity. Gly-153 carries GPI-anchor amidated glycine lipidation. The propeptide at 154-186 (GAPAATSPNAASSLTFSGAAALVAMGGAWIGLL) is removed in mature form.

Belongs to the multicopper oxidase family. Cu cation is required as a cofactor.

It localises to the cell membrane. It is found in the secreted. Its function is as follows. Probable electron transfer copper protein that serves as a direct electron donor. This Arthroderma benhamiae (strain ATCC MYA-4681 / CBS 112371) (Trichophyton mentagrophytes) protein is Probable GPI-anchored cupredoxin ARB_05732-1.